The primary structure comprises 465 residues: Solute carrier family 7 member 12 (465 aa).

Residues 1–6 (MQLLRA) lie on the Cytoplasmic side of the membrane. Residues 7 to 27 (LGVFHVSMILFSATLGTGIFV) traverse the membrane as a helical segment. The Extracellular segment spans residues 28 to 39 (TPKAVLKYSSLN). A helical membrane pass occupies residues 40-60 (IPVSLSIWAGCGLLSIMSALC). The Cytoplasmic portion of the chain corresponds to 61 to 81 (NAEIATTYPLSGASYYFLKRT). The chain crosses the membrane as a helical span at residues 82–102 (LGSSVAFLSLWIKLFAHFLGI). The Extracellular portion of the chain corresponds to 103–132 (GAQCLLIATSVIQCFYSGCPAPELPTKCLA). The helical transmembrane segment at 133-153 (LAILWSFGIVSARGIKTVAWF) threads the bilayer. Residue N154 is a topological domain, cytoplasmic. Residues 155–175 (TVSSFIKLSVLCLISLTVLLV) form a helical membrane-spanning segment. At 176-202 (NGKKENVSRFENALDAELPNASQIADA) the chain is on the extracellular side. Residues 203–223 (ILQVSYSYLGSSVLIVIAGEI) traverse the membrane as a helical segment. Residues 224-234 (KRPTETIPKTL) lie on the Cytoplasmic side of the membrane. The chain crosses the membrane as a helical span at residues 235-255 (IYGISIVTVLYLLTNISYLAV). The Extracellular portion of the chain corresponds to 256–280 (LTSQEIIFSDSVGVTWMNRVFPSIQ). The helical transmembrane segment at 281–301 (WISSFLISAFLLGSVSCGIVS) threads the bilayer. Residues 302-327 (ASRVFYSASQEGEFPSIYSMLNDHHS) lie on the Cytoplasmic side of the membrane. Residues 328 to 351 (PAVADIQIVILSSVAIISSSIIYL) form a helical membrane-spanning segment. Residues 352–356 (VKYVS) lie on the Extracellular side of the membrane. The chain crosses the membrane as a helical span at residues 357-375 (LGSFCINLLQMIGLLKIRY). The Cytoplasmic segment spans residues 376–386 (QNPDIPRPYKV). The helical transmembrane segment at 387–407 (WLPFIFGSIALSLFLIFTPVI) threads the bilayer. Residues 408–409 (QS) are Extracellular-facing. Residues 410 to 430 (PSIEHVYQVVFLFCGFLCYWL) traverse the membrane as a helical segment. Residues 431-465 (QANLNGHATCFDTITCYCQLLFNISPSEDPEEQKN) lie on the Cytoplasmic side of the membrane.

This sequence belongs to the amino acid-polyamine-organocation (APC) superfamily. Probably forms multimers, perhaps with an unknown protein(s). In terms of tissue distribution, expressed in kidney and red blood cells (at protein level). Expressed in kidney along the collecting ducts in the cortex, outer and inner medulla. May be expressed in placenta, lungs, spleen and skeletal muscles.

It is found in the apical cell membrane. The protein resides in the basal cell membrane. It localises to the cytoplasm. Functionally, probably mediates sodium- and chloride-independent uptake of neutral amino acids. The protein is Solute carrier family 7 member 12 of Mus musculus (Mouse).